The following is an 805-amino-acid chain: Leucine--tRNA ligase (805 aa).

A 'HIGH' region motif is present at residues 40-51 (PYPSGQGLHVGH). Residues 576 to 580 (KMSKS) carry the 'KMSKS' region motif. Lysine 579 lines the ATP pocket.

The protein belongs to the class-I aminoacyl-tRNA synthetase family.

It is found in the cytoplasm. It catalyses the reaction tRNA(Leu) + L-leucine + ATP = L-leucyl-tRNA(Leu) + AMP + diphosphate. This Ligilactobacillus salivarius (strain UCC118) (Lactobacillus salivarius) protein is Leucine--tRNA ligase.